Consider the following 457-residue polypeptide: Ribosomal RNA-processing protein 8 (457 aa).

The segment at 47–237 is disordered; the sequence is LEAASLSQQT…KSDSQESRAG (191 aa). Residues 51-61 show a composition bias toward polar residues; sequence SLSQQTPSLPG. 3 positions are modified to phosphoserine: Ser-62, Ser-64, and Ser-105. The segment covering 129–138 has biased composition (basic and acidic residues); it reads GEEKGKRKCQ. Over residues 139 to 183 the composition is skewed to polar residues; that stretch reads EYSSLHLTQPLDSVDQTVHNSRTSTATIDPSKPSPESMSPNSSHT. 2 positions are modified to phosphoserine: Ser-172 and Ser-177. The span at 184-203 shows a compositional bias: basic residues; sequence LSRKQWRNRQKNKRRHKNKF. 6 residues coordinate S-adenosyl-L-methionine: His-282, Gly-317, Asp-335, Asp-347, Met-348, and Cys-364.

The protein belongs to the methyltransferase superfamily. RRP8 family. In terms of assembly, component of the eNoSC complex, composed of SIRT1, SUV39H1 and RRP8.

The protein localises to the nucleus. It localises to the nucleolus. Its function is as follows. Essential component of the eNoSC (energy-dependent nucleolar silencing) complex, a complex that mediates silencing of rDNA in response to intracellular energy status and acts by recruiting histone-modifying enzymes. The eNoSC complex is able to sense the energy status of cell: upon glucose starvation, elevation of NAD(+)/NADP(+) ratio activates SIRT1, leading to histone H3 deacetylation followed by dimethylation of H3 at 'Lys-9' (H3K9me2) by SUV39H1 and the formation of silent chromatin in the rDNA locus. In the complex, RRP8 binds to H3K9me2 and probably acts as a methyltransferase. Its substrates are however unknown. This Mus musculus (Mouse) protein is Ribosomal RNA-processing protein 8 (Rrp8).